The primary structure comprises 505 residues: Putative F-box protein At1g58310 (505 aa).

An F-box domain is found at 7-55; sequence RDIISGLPDSLLCHILSFLNTKEAASTSVLAKKWRYLFASVPNLDFDDS.

The polypeptide is Putative F-box protein At1g58310 (Arabidopsis thaliana (Mouse-ear cress)).